Here is a 155-residue protein sequence, read N- to C-terminus: MKQSDLQRLVERVSLQFFKKPFKHTATFNPRLRTTGGRYILQTHNIELNKKYYEAFGEEELIAIIKHELCHYHLHLEGKGYRHRDQDFRDLLRQVQAPRYCRPLPQQAQQRTKKVYVYVCSKCSLKYRRKKRVNTDKYVCGQCGGKLMLDNGGEI.

Residues 6–148 (LQRLVERVSL…VCGQCGGKLM (143 aa)) form the SprT-like domain. Residue H67 participates in Zn(2+) binding. The active site involves E68. H71 is a Zn(2+) binding site.

Belongs to the SprT family. The cofactor is Zn(2+).

Its subcellular location is the cytoplasm. The protein is Protein SprT-like of Geobacillus sp. (strain WCH70).